Here is a 533-residue protein sequence, read N- to C-terminus: Putative phosphate permease jhp_1384 (533 aa).

The next 12 helical transmembrane spans lie at isoleucine 23–alanine 43, glycine 47–asparagine 67, alanine 81–isoleucine 101, valine 129–alanine 149, serine 156–tryptophan 176, isoleucine 182–methionine 202, valine 221–valine 241, valine 248–phenylalanine 268, valine 286–glycine 306, valine 338–glycine 358, leucine 372–serine 392, and leucine 509–isoleucine 529.

Belongs to the inorganic phosphate transporter (PiT) (TC 2.A.20) family.

The protein localises to the cell membrane. Functionally, potential transporter for phosphate. The sequence is that of Putative phosphate permease jhp_1384 from Helicobacter pylori (strain J99 / ATCC 700824) (Campylobacter pylori J99).